Consider the following 71-residue polypeptide: Antitoxin VapB22 (71 aa).

Belongs to the phD/YefM antitoxin family.

Antitoxin component of a type II toxin-antitoxin (TA) system. Upon expression in M.smegmatis neutralizes the effect of cognate toxin VapC22. The protein is Antitoxin VapB22 (vapB22) of Mycobacterium tuberculosis (strain ATCC 25618 / H37Rv).